A 284-amino-acid polypeptide reads, in one-letter code: Bifunctional protein FolD (284 aa).

Residues 165–167, Ser-190, and Val-231 contribute to the NADP(+) site; that span reads GRS.

It belongs to the tetrahydrofolate dehydrogenase/cyclohydrolase family. As to quaternary structure, homodimer.

It carries out the reaction (6R)-5,10-methylene-5,6,7,8-tetrahydrofolate + NADP(+) = (6R)-5,10-methenyltetrahydrofolate + NADPH. The catalysed reaction is (6R)-5,10-methenyltetrahydrofolate + H2O = (6R)-10-formyltetrahydrofolate + H(+). Its pathway is one-carbon metabolism; tetrahydrofolate interconversion. In terms of biological role, catalyzes the oxidation of 5,10-methylenetetrahydrofolate to 5,10-methenyltetrahydrofolate and then the hydrolysis of 5,10-methenyltetrahydrofolate to 10-formyltetrahydrofolate. The chain is Bifunctional protein FolD from Ruminiclostridium cellulolyticum (strain ATCC 35319 / DSM 5812 / JCM 6584 / H10) (Clostridium cellulolyticum).